Reading from the N-terminus, the 213-residue chain is Adenylate kinase (213 aa).

10 to 15 (GSGKGT) provides a ligand contact to ATP. Residues 30-59 (SVGDLLRNIISSSSELGKKIKGTVESGNLI) are NMP. AMP is bound by residues Arg36, 57–59 (NLI), 83–86 (GFPR), and Gln90. The interval 125-160 (NRLACLDCKNIYSVSSFKSTTCAKCKSTRLEKRIDD) is LID. Arg126 lines the ATP pocket. Zn(2+) contacts are provided by Cys129 and Cys132. 135 to 136 (IY) contributes to the ATP binding site. Cys146 and Cys149 together coordinate Zn(2+). 2 residues coordinate AMP: Arg157 and Arg169. Leu195 is an ATP binding site.

The protein belongs to the adenylate kinase family. As to quaternary structure, monomer.

Its subcellular location is the cytoplasm. The enzyme catalyses AMP + ATP = 2 ADP. Its pathway is purine metabolism; AMP biosynthesis via salvage pathway; AMP from ADP: step 1/1. Its function is as follows. Catalyzes the reversible transfer of the terminal phosphate group between ATP and AMP. Plays an important role in cellular energy homeostasis and in adenine nucleotide metabolism. In Wolbachia pipientis wMel, this protein is Adenylate kinase.